The following is a 327-amino-acid chain: MSFLGGFFGPICEIDVALNDGETRKMAEMKTEDGKVEKHYLFYDGESVSGKVNLAFKQPGKRLEHQGIRIEFVGQIELFNDKSNTHEFVNLVKELALPGELTQSRSYDFEFMQVEKPYESYIGANVRLRYFLKVTIVRRLTDLVKEYDLIVHQLATYPDVNNSIKMEVGIEDCLHIEFEYNKSKYHLKDVIVGKIYFLLVRIKIQHMELQLIKKEITGIGPSTTTETETIAKYEIMDGAPVKGESIPIRLFLAGYDPTPTMRDVNKKFSVRYFLNLVLVDEEDRRYFKQQEIILWRKAPEKLRKQRTNFHQRFESPDSQASAEQPEM.

The interval 306–327 (RTNFHQRFESPDSQASAEQPEM) is disordered. At S315 the chain carries Phosphoserine. Residues 316-327 (PDSQASAEQPEM) are compositionally biased toward polar residues.

This sequence belongs to the VPS26 family. As to quaternary structure, component of the heterotrimeric retromer cargo-selective complex (CSC), also described as vacuolar protein sorting subcomplex (VPS), formed by VPS26 (VPS26A or VPS26B), VPS29 and VPS35. The CSC has a highly elongated structure with VPS26 and VPS29 binding independently at opposite distal ends of VPS35 as central platform. The CSC is believed to associate with variable sorting nexins to form functionally distinct retromer complex variants. The originally described retromer complex (also called SNX-BAR retromer) is a pentamer containing the CSC and a heterodimeric membrane-deforming subcomplex formed between SNX1 or SNX2 and SNX5 or SNX6 (also called SNX-BAR subcomplex); the respective CSC and SNX-BAR subcomplexes associate with low affinity. The CSC associates with SNX3 to form a SNX3-retromer complex. The CSC associates with SNX27, the WASH complex and the SNX-BAR subcomplex to form the SNX27-retromer complex. Interacts with VPS29, VPS35, SNX27. Interacts with SNX1, SNX2, SNX5, SNX6, SNX3, RAB7A, ECPAS, EHD1, WASHC5, SORL1.

It is found in the cytoplasm. Its subcellular location is the endosome membrane. It localises to the early endosome. In terms of biological role, acts as a component of the retromer cargo-selective complex (CSC). The CSC is believed to be the core functional component of retromer or respective retromer complex variants acting to prevent missorting of selected transmembrane cargo proteins into the lysosomal degradation pathway. The recruitment of the CSC to the endosomal membrane involves RAB7A and SNX3. The SNX-BAR retromer mediates retrograde transport of cargo proteins from endosomes to the trans-Golgi network (TGN) and is involved in endosome-to-plasma membrane transport for cargo protein recycling. The SNX3-retromer mediates the retrograde endosome-to-TGN transport of WLS distinct from the SNX-BAR retromer pathway. The SNX27-retromer is believed to be involved in endosome-to-plasma membrane trafficking and recycling of a broad spectrum of cargo proteins. The CSC complex seems to act as recruitment hub for other proteins, such as the WASH complex and TBC1D5. Required for retrograde transport of lysosomal enzyme receptor IGF2R. Required to regulate transcytosis of the polymeric immunoglobulin receptor (pIgR-pIgA). Required for the endosomal localization of WASHC2 (indicative for the WASH complex). Required for the endosomal localization of TBC1D5. Mediates retromer cargo recognition of SORL1 and is involved in trafficking of SORL1 implicated in sorting and processing of APP. Involved in retromer-independent lysosomal sorting of F2R. Involved in recycling of ADRB2. Acts redundantly with VSP26B in SNX-27 mediated endocytic recycling of SLC2A1/GLUT1. Enhances the affinity of SNX27 for PDZ-binding motifs in cargo proteins. This Mus musculus (Mouse) protein is Vacuolar protein sorting-associated protein 26A (Vps26a).